The sequence spans 455 residues: EP1-like glycoprotein 1 (455 aa).

The first 22 residues, 1-22, serve as a signal peptide directing secretion; sequence MLRFDYLLITALAISTVSVVMA. Residues 43-163 form the Bulb-type lectin domain; it reads TEYDASYRFL…HGKFVWQSFD (121 aa). Asparagine 106, asparagine 191, asparagine 211, asparagine 241, and asparagine 289 each carry an N-linked (GlcNAc...) asparagine glycan. Residue cysteine 374 is modified to S-nitrosocysteine. Residues 374–455 form the PAN domain; that stretch reads CSGGKGKAVN…NTSSVAYIKY (82 aa). 2 cysteine pairs are disulfide-bonded: cysteine 410–cysteine 432 and cysteine 414–cysteine 420. A glycan (N-linked (GlcNAc...) asparagine) is linked at asparagine 446.

The protein resides in the secreted. It localises to the cell wall. In Arabidopsis thaliana (Mouse-ear cress), this protein is EP1-like glycoprotein 1.